Here is a 111-residue protein sequence, read N- to C-terminus: Cytochrome b-c1 complex subunit 7 (111 aa).

The residue at position 2 (alanine 2) is an N-acetylalanine. At lysine 19 the chain carries N6-acetyllysine. At lysine 78 the chain carries N6-acetyllysine; alternate. The residue at position 78 (lysine 78) is an N6-succinyllysine; alternate. Lysine 83 bears the N6-acetyllysine mark. At lysine 88 the chain carries N6-acetyllysine; alternate. Position 88 is an N6-succinyllysine; alternate (lysine 88). Lysine 96 is subject to N6-acetyllysine.

This sequence belongs to the UQCRB/QCR7 family. As to quaternary structure, component of the ubiquinol-cytochrome c oxidoreductase (cytochrome b-c1 complex, complex III, CIII), a multisubunit enzyme composed of 11 subunits. The complex is composed of 3 respiratory subunits cytochrome b, cytochrome c1 and Rieske protein UQCRFS1, 2 core protein subunits UQCRC1/QCR1 and UQCRC2/QCR2, and 6 low-molecular weight protein subunits UQCRH/QCR6, UQCRB/QCR7, UQCRQ/QCR8, UQCR10/QCR9, UQCR11/QCR10 and subunit 9, the cleavage product of Rieske protein UQCRFS1. The complex exists as an obligatory dimer and forms supercomplexes (SCs) in the inner mitochondrial membrane with NADH-ubiquinone oxidoreductase (complex I, CI) and cytochrome c oxidase (complex IV, CIV), resulting in different assemblies (supercomplex SCI(1)III(2)IV(1) and megacomplex MCI(2)III(2)IV(2)).

It localises to the mitochondrion inner membrane. In terms of biological role, component of the ubiquinol-cytochrome c oxidoreductase, a multisubunit transmembrane complex that is part of the mitochondrial electron transport chain which drives oxidative phosphorylation. The respiratory chain contains 3 multisubunit complexes succinate dehydrogenase (complex II, CII), ubiquinol-cytochrome c oxidoreductase (cytochrome b-c1 complex, complex III, CIII) and cytochrome c oxidase (complex IV, CIV), that cooperate to transfer electrons derived from NADH and succinate to molecular oxygen, creating an electrochemical gradient over the inner membrane that drives transmembrane transport and the ATP synthase. The cytochrome b-c1 complex catalyzes electron transfer from ubiquinol to cytochrome c, linking this redox reaction to translocation of protons across the mitochondrial inner membrane, with protons being carried across the membrane as hydrogens on the quinol. In the process called Q cycle, 2 protons are consumed from the matrix, 4 protons are released into the intermembrane space and 2 electrons are passed to cytochrome c. This Bos taurus (Bovine) protein is Cytochrome b-c1 complex subunit 7 (UQCRB).